The following is an 817-amino-acid chain: Fibroblast growth factor receptor 2 (817 aa).

A signal peptide spans 1–22 (MFARGWLLGALLLMTLATVSVA). Topologically, residues 23–377 (RPSLKIDLVN…ETDYPPDYVE (355 aa)) are extracellular. 3 consecutive Ig-like C2-type domains span residues 26 to 126 (LKID…VNVT), 159 to 247 (PEKM…YTLD), and 256 to 358 (PILQ…AWLT). N-linked (GlcNAc...) asparagine glycosylation is found at asparagine 32, asparagine 84, and asparagine 124. The cysteines at positions 63 and 108 are disulfide-linked. The heparin-binding stretch occupies residues 161–178 (KMEKKLHAVPAANTVKFR). Cysteine 179 and cysteine 231 form a disulfide bridge. N-linked (GlcNAc...) asparagine glycosylation is found at asparagine 228, asparagine 265, asparagine 297, asparagine 318, and asparagine 331. Residues cysteine 278 and cysteine 342 are joined by a disulfide bond. The helical transmembrane segment at 378 to 398 (IAIYCIGVFLIACMVVIVVVC) threads the bilayer. The Cytoplasmic segment spans residues 399 to 817 (RMRTSAKKPD…YQHINGGIKT (419 aa)). The interval 429-465 (TVSSDSSSSMSSSTPLVRITTRRSSAHDDPIPEYDLP) is disordered. Low complexity predominate over residues 431-441 (SSDSSSSMSSS). Position 462 is a phosphotyrosine; by autocatalysis (tyrosine 462). One can recognise a Protein kinase domain in the interval 477–766 (LTLGKPLGEG…LTLATNEEYL (290 aa)). Residues 483 to 491 (LGEGCFGQV), lysine 513, 561 to 563 (EYA), and asparagine 567 each bind ATP. At tyrosine 582 the chain carries Phosphotyrosine; by autocatalysis. Aspartate 622 acts as the Proton acceptor in catalysis. A phosphotyrosine; by autocatalysis mark is found at tyrosine 652, tyrosine 653, and tyrosine 765.

Belongs to the protein kinase superfamily. Tyr protein kinase family. Fibroblast growth factor receptor subfamily. Monomer. Homodimer after ligand binding. Autophosphorylated. Binding of FGF family members together with heparan sulfate proteoglycan or heparin promotes receptor dimerization and autophosphorylation on tyrosine residues. Autophosphorylation occurs in trans between the two FGFR molecules present in the dimer. Post-translationally, N-glycosylated in the endoplasmic reticulum. The N-glycan chains undergo further maturation to an Endo H-resistant form in the Golgi apparatus. In terms of processing, ubiquitinated. FGFR2 is rapidly ubiquitinated after autophosphorylation, leading to internalization and degradation. Subject to degradation both in lysosomes and by the proteasome.

The protein localises to the cell membrane. It localises to the golgi apparatus. Its subcellular location is the cytoplasmic vesicle. It catalyses the reaction L-tyrosyl-[protein] + ATP = O-phospho-L-tyrosyl-[protein] + ADP + H(+). With respect to regulation, present in an inactive conformation in the absence of bound ligand. Ligand binding leads to dimerization and activation by autophosphorylation on tyrosine residues. Tyrosine-protein kinase that acts as a cell-surface receptor for fibroblast growth factors and plays an essential role in the regulation of cell proliferation, differentiation, migration and apoptosis, and in the regulation of embryonic development. Required for normal embryonic patterning, limb bud development, lung morphogenesis, osteogenesis and skin development. Plays an essential role in the regulation of osteoblast differentiation, proliferation and apoptosis, and is required for normal skeleton development. Promotes cell proliferation in keratinocytes and immature osteoblasts, but promotes apoptosis in differentiated osteoblasts. Phosphorylates PLCG1, FRS2 and PAK4. Ligand binding leads to the activation of several signaling cascades. Activation of PLCG1 leads to the production of the cellular signaling molecules diacylglycerol and inositol 1,4,5-trisphosphate. Phosphorylation of FRS2 triggers recruitment of GRB2, GAB1, PIK3R1 and SOS1, and mediates activation of RAS, MAPK1/ERK2, MAPK3/ERK1 and the MAP kinase signaling pathway, as well as of the AKT1 signaling pathway. FGFR2 signaling is down-regulated by ubiquitination, internalization and degradation. Mutations that lead to constitutive kinase activation or impair normal FGFR2 maturation, internalization and degradation lead to aberrant signaling. Over-expressed FGFR2 promotes activation of STAT1. The polypeptide is Fibroblast growth factor receptor 2 (fgfr2) (Danio rerio (Zebrafish)).